We begin with the raw amino-acid sequence, 113 residues long: Gas vesicle protein I2 (113 aa).

The disordered stretch occupies residues 1–93 (MTPTNRHTHG…TVPEQPTHAT (93 aa)). Low complexity predominate over residues 11–22 (QNAQHARRNAQQ). A compositionally biased stretch (polar residues) spans 52-63 (EQPTSDTTNPAA). Over residues 69–81 (AQRTNAQNAARNA) the composition is skewed to low complexity. Residues 82-93 (HSTVPEQPTHAT) show a composition bias toward polar residues.

The protein belongs to the gas vesicle GvpI family. In terms of assembly, gvpF to GvpM interact with each other in vitro, and may form multi-subunit complex(es). Interacts with GvpC and GvpO.

The protein localises to the gas vesicle. Its function is as follows. Proteins GvpF to GvpM might be involved in nucleating gas vesicle formation. A minor component of the gas vesicle. Gas vesicles are hollow, gas filled proteinaceous nanostructures found in several microbial planktonic microorganisms. They allow positioning of halobacteria at the optimal depth for growth in the poorly aerated, shallow brine pools of their habitat. Expression of 2 c-vac DNA fragments containing 2 divergently transcribed regions (gvpE-gvpF-gvpG-gvpH-gvpI-gvpJ-gvpK-gvpL-gvpM and gvpA-gvpC-gvpN-gvpO) allows H.volcanii to produce gas vesicles. The sequence is that of Gas vesicle protein I2 from Halobacterium salinarum (strain ATCC 700922 / JCM 11081 / NRC-1) (Halobacterium halobium).